Consider the following 147-residue polypeptide: uncharacterized protein (147 aa).

Disordered stretches follow at residues 1–49 (MRTP…NLNE) and 125–147 (SPSP…RKSN). 2 stretches are compositionally biased toward low complexity: residues 8 to 49 (NNNY…NLNE) and 125 to 140 (SPSP…PQNT).

This is an uncharacterized protein from Dictyostelium discoideum (Social amoeba).